Here is a 364-residue protein sequence, read N- to C-terminus: tRNA 2-selenouridine synthase (364 aa).

The Rhodanese domain occupies 14–137 (LIADTPIIDV…LRQTTIQATI (124 aa)). The S-selanylcysteine intermediate role is filled by Cys97.

Belongs to the SelU family. Monomer.

The catalysed reaction is 5-methylaminomethyl-2-thiouridine(34) in tRNA + selenophosphate + (2E)-geranyl diphosphate + H2O + H(+) = 5-methylaminomethyl-2-selenouridine(34) in tRNA + (2E)-thiogeraniol + phosphate + diphosphate. The enzyme catalyses 5-methylaminomethyl-2-thiouridine(34) in tRNA + (2E)-geranyl diphosphate = 5-methylaminomethyl-S-(2E)-geranyl-thiouridine(34) in tRNA + diphosphate. It carries out the reaction 5-methylaminomethyl-S-(2E)-geranyl-thiouridine(34) in tRNA + selenophosphate + H(+) = 5-methylaminomethyl-2-(Se-phospho)selenouridine(34) in tRNA + (2E)-thiogeraniol. It catalyses the reaction 5-methylaminomethyl-2-(Se-phospho)selenouridine(34) in tRNA + H2O = 5-methylaminomethyl-2-selenouridine(34) in tRNA + phosphate. Its function is as follows. Involved in the post-transcriptional modification of the uridine at the wobble position (U34) of tRNA(Lys), tRNA(Glu) and tRNA(Gln). Catalyzes the conversion of 2-thiouridine (S2U-RNA) to 2-selenouridine (Se2U-RNA). Acts in a two-step process involving geranylation of 2-thiouridine (S2U) to S-geranyl-2-thiouridine (geS2U) and subsequent selenation of the latter derivative to 2-selenouridine (Se2U) in the tRNA chain. This chain is tRNA 2-selenouridine synthase, found in Escherichia coli O139:H28 (strain E24377A / ETEC).